A 511-amino-acid chain; its full sequence is Ribose import ATP-binding protein RbsA (511 aa).

ABC transporter domains lie at Leu-7–Glu-242 and Cys-256–Gln-500. Gly-39–Ser-46 contributes to the ATP binding site.

Belongs to the ABC transporter superfamily. Ribose importer (TC 3.A.1.2.1) family. In terms of assembly, the complex is composed of an ATP-binding protein (RbsA), two transmembrane proteins (RbsC) and a solute-binding protein (RbsB).

It is found in the cell inner membrane. It carries out the reaction D-ribose(out) + ATP + H2O = D-ribose(in) + ADP + phosphate + H(+). In terms of biological role, part of the ABC transporter complex RbsABC involved in ribose import. Responsible for energy coupling to the transport system. This is Ribose import ATP-binding protein RbsA from Ruegeria sp. (strain TM1040) (Silicibacter sp.).